The primary structure comprises 184 residues: ATP synthase subunit b, chloroplastic (184 aa).

A helical membrane pass occupies residues 27–49; sequence LATNLINLSVVLGVLIFFGKGVL.

Belongs to the ATPase B chain family. In terms of assembly, F-type ATPases have 2 components, F(1) - the catalytic core - and F(0) - the membrane proton channel. F(1) has five subunits: alpha(3), beta(3), gamma(1), delta(1), epsilon(1). F(0) has four main subunits: a(1), b(1), b'(1) and c(10-14). The alpha and beta chains form an alternating ring which encloses part of the gamma chain. F(1) is attached to F(0) by a central stalk formed by the gamma and epsilon chains, while a peripheral stalk is formed by the delta, b and b' chains.

It is found in the plastid. It localises to the chloroplast thylakoid membrane. In terms of biological role, f(1)F(0) ATP synthase produces ATP from ADP in the presence of a proton or sodium gradient. F-type ATPases consist of two structural domains, F(1) containing the extramembraneous catalytic core and F(0) containing the membrane proton channel, linked together by a central stalk and a peripheral stalk. During catalysis, ATP synthesis in the catalytic domain of F(1) is coupled via a rotary mechanism of the central stalk subunits to proton translocation. Functionally, component of the F(0) channel, it forms part of the peripheral stalk, linking F(1) to F(0). This is ATP synthase subunit b, chloroplastic from Manihot esculenta (Cassava).